A 48-amino-acid polypeptide reads, in one-letter code: Small, acid-soluble spore protein P (48 aa).

Basic and acidic residues predominate over residues 1–12; sequence MTNKNDGKDMRK. Residues 1–48 form a disordered region; sequence MTNKNDGKDMRKNAPKGDNPGQPEPLDGSKKVKNRNHTRQKHNTSHDM. A compositionally biased stretch (basic residues) spans 31–48; the sequence is KVKNRNHTRQKHNTSHDM.

This sequence belongs to the SspP family.

It localises to the spore core. The chain is Small, acid-soluble spore protein P from Geobacillus kaustophilus (strain HTA426).